Reading from the N-terminus, the 337-residue chain is Cell-surface associated glycoprotein DFI1 (337 aa).

The Cytoplasmic portion of the chain corresponds to 1–21; sequence MEKLSINNNNNNRRYQSRRFD. A helical transmembrane segment spans residues 22–42; that stretch reads GITIIRIVVLVFIVTVSTYFV. At 43–269 the chain is on the extracellular side; sequence NSYTCNQPHH…NGGGLSHTNR (227 aa). 4 N-linked (GlcNAc...) asparagine glycosylation sites follow: N53, N65, N87, and N100. Composition is skewed to low complexity over residues 124-220 and 241-259; these read SSTF…TSAS and SVIS…KNND. Disordered stretches follow at residues 124–224 and 241–265; these read SSTF…QHVT and SVIS…GGLS. The chain crosses the membrane as a helical span at residues 270-290; sequence IVVGVVVGVGGSILIGLLAVL. The Glycophorin A motif lies at 273–277; that stretch reads GVVVG. At 291-337 the chain is on the cytoplasmic side; the sequence is FYLRKRNNRDYEGGWTFWRKNEKLGSDEFFNGELGVRDRNINQGSNF. The short motif at 301–314 is the Calmodulin-binding element; that stretch reads YEGGWTFWRKNEKL.

The protein belongs to the MID2 like cell wall stress sensor family. In terms of processing, cross-linked to the carbohydrate polymers of the cell wall. Post-translationally, O-glycosylated by MNT1 and MNT2. Also N-glycosylated.

It is found in the cell membrane. The protein resides in the cell septum. It localises to the secreted. The protein localises to the cell wall. Cell-surface associated glycoprotein that acts as a plasma membrane receptor-type protein which senses the presence of matrix. Binds to calmodulin in response to environmental conditions and initiates a signaling cascade that activates CEK1, thus promoting invasive filamentation. Involved in the maintenance of the cell wall. The chain is Cell-surface associated glycoprotein DFI1 from Candida albicans (strain SC5314 / ATCC MYA-2876) (Yeast).